The following is a 483-amino-acid chain: Altronate oxidoreductase (483 aa).

NAD(+) is bound at residue 18-29 (IIQFGEGNFLRA).

This sequence belongs to the mannitol dehydrogenase family. UxaB subfamily.

The enzyme catalyses D-altronate + NAD(+) = keto-D-tagaturonate + NADH + H(+). The protein operates within carbohydrate metabolism; pentose and glucuronate interconversion. The chain is Altronate oxidoreductase from Yersinia pestis.